A 448-amino-acid chain; its full sequence is Death-associated protein kinase 3 (448 aa).

A Protein kinase domain is found at 13–275; sequence YEMGEELGSG…IAQSLEHSWI (263 aa). ATP-binding positions include 19–27 and Lys42; that span reads LGSGQFAIV. Residue Asp139 is the Proton acceptor of the active site. The interval 161–204 is activation segment; sequence DFGIAHRIEAGSEFKNIFGTPEFVAPEIVNYEPLGLEADMWSIG. A phosphothreonine mark is found at Thr180 and Thr225. A Phosphothreonine; by autocatalysis modification is found at Thr265. Thr265 bears the Phosphothreonine; by ROCK1 mark. Ser304 bears the Phosphoserine; by DAPK1 mark. Position 306 is a phosphoserine; by autocatalysis and DAPK1 (Ser306). Phosphoserine; by DAPK1 is present on residues Ser307, Ser313, and Ser321. The tract at residues 390–448 is interaction with CDC5L; sequence AQEEARAALLGAGGLKRRLCRLENRYDALAAQVAAEVQFVRDLVRALEQERLQAECGVR. The segment at 422–436 is leucine-zipper; sequence VAAEVQFVRDLVRAL.

It belongs to the protein kinase superfamily. CAMK Ser/Thr protein kinase family. DAP kinase subfamily. Homooligomer in its kinase-active form (homotrimers and homodimers are reported); monomeric in its kinase-inactive form. Homodimerization is required for activation segment autophosphorylation. Interacts with DAXX, PAWR, ATF4, NLK, TCF7L2, UBE2D1, UBE2D2, UBE2D3, and CDC5L. Interacts with AR; enhanced by AATF. Interacts with LUZP1; the interaction is likely to occur throughout the cell cycle and reduces the LUZP1-mediated suppression of MYL9 phosphorylation. Requires Mg(2+) as cofactor. Ubiquitinated. Ubiquitination mediated by the UBE2D3 E3 ligase does not lead to proteasomal degradation, but influences promyelocytic leukemia protein nuclear bodies (PML-NBs) formation in the nucleus. In terms of processing, the phosphorylation status is critical for kinase activity, oligomerization and intracellular localization. Phosphorylation at Thr-180, Thr-225 and Thr-265 is essential for activity. The phosphorylated form is localized in the cytoplasm and nuclear translocation or retention is maximal when it is not phosphorylated. Phosphorylation increases the trimeric form, and its dephosphorylation favors a kinase-inactive monomeric form. In terms of tissue distribution, highly expressed in heart, brain, lung, skeletal muscle, kidney and testis. Lower levels in liver and spleen.

The protein localises to the nucleus. Its subcellular location is the PML body. It localises to the cytoplasm. It is found in the cytoskeleton. The protein resides in the microtubule organizing center. The protein localises to the centrosome. Its subcellular location is the chromosome. It localises to the centromere. It is found in the spindle. The protein resides in the midbody. The enzyme catalyses L-seryl-[protein] + ATP = O-phospho-L-seryl-[protein] + ADP + H(+). It catalyses the reaction L-threonyl-[protein] + ATP = O-phospho-L-threonyl-[protein] + ADP + H(+). A sequential activation is proposed: autophosphorylation at consensus sites is leading to dimerization of the catalytic domain and activation segment exchange (producing an active confirmation of both kinase modules in trans) followed by phosphorylation at Thr-180 in the activation segment and at other regulatory sites. Phosphorylation at Thr-180, Thr-225 and Thr-265 is essential for activity. Inhibited by pyridone 6 (K00225), a potent, ATP-competitive inhibitor. Phosphorylation at Thr-180, Thr-225 and Thr-265 is essential for activity. Serine/threonine kinase which is involved in the regulation of apoptosis, autophagy, transcription, translation and actin cytoskeleton reorganization. Regulates both type I (caspase-dependent) apoptotic and type II (caspase-independent) autophagic cell deaths signal, depending on the cellular setting. Involved in formation of promyelocytic leukemia protein nuclear body (PML-NB). Involved in apoptosis involving PAWR which mediates cytoplasmic relocation; in vitro phosphorylates PAWR. Regulates myosin phosphorylation in both smooth muscle and non-muscle cells. In smooth muscle, regulates myosin either directly by phosphorylating MYL12B and MYL9 or through inhibition of smooth muscle myosin phosphatase (SMPP1M) via phosphorylation of PPP1R12A; the inhibition of SMPP1M functions to enhance muscle responsiveness to Ca(2+) and promote a contractile state. Phosphorylates MYL12B in non-muscle cells leading to reorganization of actin cytoskeleton such as in regulation of cell polarity and cell migration. Positively regulates canonical Wnt/beta-catenin signaling through interaction with NLK and TCF7L2; disrupts the NLK-TCF7L2 complex thereby influencing the phosphorylation of TCF7L2 by NLK. Phosphorylates STAT3 and enhances its transcriptional activity. Enhances transcription from AR-responsive promoters in a hormone- and kinase-dependent manner. Phosphorylates histone H3 on 'Thr-11' at centromeres during mitosis. Phosphorylates RPL13A on 'Ser-77' upon interferon-gamma activation which is causing RPL13A release from the ribosome, RPL13A association with the GAIT complex and its subsequent involvement in transcript-selective translation inhibition. The chain is Death-associated protein kinase 3 (Dapk3) from Mus musculus (Mouse).